The primary structure comprises 132 residues: T-cell receptor alpha chain V region CTL-F3 (132 aa).

The first 22 residues, 1–22 (MNMRPDTCSVLVLLLMLRRNNG), serve as a signal peptide directing secretion. Residues 23-114 (DSVTQTEGLV…DSALYYCALS (92 aa)) are v segment. An N-linked (GlcNAc...) asparagine glycan is attached at Asn43. A disulfide bond links Cys44 and Cys111. Residues 115-132 (NAGAKLTFGGGTRLTVRP) form a j segment region.

The protein is T-cell receptor alpha chain V region CTL-F3 of Mus musculus (Mouse).